A 569-amino-acid chain; its full sequence is Proline--tRNA ligase (569 aa).

This sequence belongs to the class-II aminoacyl-tRNA synthetase family. ProS type 1 subfamily. As to quaternary structure, homodimer.

The protein localises to the cytoplasm. It carries out the reaction tRNA(Pro) + L-proline + ATP = L-prolyl-tRNA(Pro) + AMP + diphosphate. Functionally, catalyzes the attachment of proline to tRNA(Pro) in a two-step reaction: proline is first activated by ATP to form Pro-AMP and then transferred to the acceptor end of tRNA(Pro). As ProRS can inadvertently accommodate and process non-cognate amino acids such as alanine and cysteine, to avoid such errors it has two additional distinct editing activities against alanine. One activity is designated as 'pretransfer' editing and involves the tRNA(Pro)-independent hydrolysis of activated Ala-AMP. The other activity is designated 'posttransfer' editing and involves deacylation of mischarged Ala-tRNA(Pro). The misacylated Cys-tRNA(Pro) is not edited by ProRS. This is Proline--tRNA ligase from Halalkalibacterium halodurans (strain ATCC BAA-125 / DSM 18197 / FERM 7344 / JCM 9153 / C-125) (Bacillus halodurans).